A 737-amino-acid chain; its full sequence is Protein OPG064 (737 aa).

Met-1 carries the post-translational modification N-acetylmethionine; by host. The cysteines at positions 496 and 535 are disulfide-linked.

This sequence belongs to the orthopoxvirus OPG064 family. In terms of assembly, interacts with host KLC2; this interaction promotes IEV trafficking by engaging the host kinesin-1 complex. Interacts with protein OPG056. In terms of processing, N-acetylated on initiator methionine by host.

Functionally, plays a role in intracellular enveloped virus (IEV) transport to the cell surface on microtubules. Together with protein OPG056, forms a complex that interacts with host KLC2 (kinesin light chain isoform 2) to engage the kinesin-1 complex and thereby promote IEV trafficking. This Homo sapiens (Human) protein is Protein OPG064 (OPG064).